The chain runs to 316 residues: tRNA dimethylallyltransferase (316 aa).

Residue 27 to 34 (GATATGKT) coordinates ATP. Residue 29 to 34 (TATGKT) participates in substrate binding. An interaction with substrate tRNA region spans residues 52-55 (DSRQ).

It belongs to the IPP transferase family. Monomer. Requires Mg(2+) as cofactor.

It carries out the reaction adenosine(37) in tRNA + dimethylallyl diphosphate = N(6)-dimethylallyladenosine(37) in tRNA + diphosphate. Catalyzes the transfer of a dimethylallyl group onto the adenine at position 37 in tRNAs that read codons beginning with uridine, leading to the formation of N6-(dimethylallyl)adenosine (i(6)A). This chain is tRNA dimethylallyltransferase, found in Treponema pallidum (strain Nichols).